A 153-amino-acid polypeptide reads, in one-letter code: Large ribosomal subunit protein uL15 (153 aa).

Positions 1–47 are disordered; it reads MRLHELSPAPGSRKDRKRVGRGDAGRGNYSGRGMKGQKARSGGATRP.

It belongs to the universal ribosomal protein uL15 family. Part of the 50S ribosomal subunit.

Binds to the 23S rRNA. The polypeptide is Large ribosomal subunit protein uL15 (Dehalococcoides mccartyi (strain ATCC BAA-2100 / JCM 16839 / KCTC 5957 / BAV1)).